The chain runs to 631 residues: tRNA uridine 5-carboxymethylaminomethyl modification enzyme MnmG (631 aa).

FAD contacts are provided by residues 15–20 (GGGHAG), valine 127, and serine 182. 275–289 (GPRYCPSIEDKIVRF) contributes to the NAD(+) binding site. Residue glutamine 372 coordinates FAD.

This sequence belongs to the MnmG family. As to quaternary structure, homodimer. Heterotetramer of two MnmE and two MnmG subunits. FAD serves as cofactor.

The protein localises to the cytoplasm. Functionally, NAD-binding protein involved in the addition of a carboxymethylaminomethyl (cmnm) group at the wobble position (U34) of certain tRNAs, forming tRNA-cmnm(5)s(2)U34. The polypeptide is tRNA uridine 5-carboxymethylaminomethyl modification enzyme MnmG (Buchnera aphidicola subsp. Schizaphis graminum (strain Sg)).